The following is an 83-amino-acid chain: Small ribosomal subunit protein bS16 (83 aa).

It belongs to the bacterial ribosomal protein bS16 family.

The polypeptide is Small ribosomal subunit protein bS16 (Pseudomonas putida (strain ATCC 700007 / DSM 6899 / JCM 31910 / BCRC 17059 / LMG 24140 / F1)).